The following is a 216-amino-acid chain: Ribosomal RNA large subunit methyltransferase E (216 aa).

The S-adenosyl-L-methionine site is built by glycine 71, tryptophan 73, aspartate 88, aspartate 104, and aspartate 126. Catalysis depends on lysine 166, which acts as the Proton acceptor.

This sequence belongs to the class I-like SAM-binding methyltransferase superfamily. RNA methyltransferase RlmE family.

Its subcellular location is the cytoplasm. The catalysed reaction is uridine(2552) in 23S rRNA + S-adenosyl-L-methionine = 2'-O-methyluridine(2552) in 23S rRNA + S-adenosyl-L-homocysteine + H(+). Functionally, specifically methylates the uridine in position 2552 of 23S rRNA at the 2'-O position of the ribose in the fully assembled 50S ribosomal subunit. This Wolbachia sp. subsp. Brugia malayi (strain TRS) protein is Ribosomal RNA large subunit methyltransferase E.